The chain runs to 441 residues: Xaa-Pro dipeptidase (441 aa).

Mn(2+) is bound by residues D244, D255, H336, E381, and E420.

It belongs to the peptidase M24B family. Bacterial-type prolidase subfamily. It depends on Mn(2+) as a cofactor.

It catalyses the reaction Xaa-L-Pro dipeptide + H2O = an L-alpha-amino acid + L-proline. Splits dipeptides with a prolyl residue in the C-terminal position. This Xanthomonas axonopodis pv. citri (strain 306) protein is Xaa-Pro dipeptidase.